Consider the following 154-residue polypeptide: Large ribosomal subunit protein uL15 (154 aa).

The interval 1-44 is disordered; the sequence is MKLNELGNCKGATRNRKRVGRGIGSGTGKTSGRGVKGQKSRSGV. Over residues 21 to 35 the composition is skewed to gly residues; that stretch reads RGIGSGTGKTSGRGV.

It belongs to the universal ribosomal protein uL15 family. In terms of assembly, part of the 50S ribosomal subunit.

Binds to the 23S rRNA. This is Large ribosomal subunit protein uL15 from Bartonella quintana (strain Toulouse) (Rochalimaea quintana).